The primary structure comprises 239 residues: Ribosomal RNA small subunit methyltransferase G (239 aa).

S-adenosyl-L-methionine is bound by residues G77, F82, 128 to 129 (AE), and R147. Residues 219–239 (RKTPKKYPRKPGTPNKLPIEK) are disordered.

It belongs to the methyltransferase superfamily. RNA methyltransferase RsmG family.

Its subcellular location is the cytoplasm. Its function is as follows. Specifically methylates the N7 position of guanine in position 535 of 16S rRNA. The chain is Ribosomal RNA small subunit methyltransferase G from Bacillus cytotoxicus (strain DSM 22905 / CIP 110041 / 391-98 / NVH 391-98).